A 576-amino-acid polypeptide reads, in one-letter code: Catalase-peroxidase (576 aa).

The tryptophyl-tyrosyl-methioninium (Trp-Tyr) (with M-250) cross-link spans 95-224; that stretch reads WHAAGSYRAA…LAAVQMGLIY (130 aa). His-96 acts as the Proton acceptor in catalysis. Positions 224 to 250 form a cross-link, tryptophyl-tyrosyl-methioninium (Tyr-Met) (with W-95); sequence YVNPEGVNGQPDPARTALHIRETFARM. His-265 lines the heme b pocket.

This sequence belongs to the peroxidase family. Peroxidase/catalase subfamily. As to quaternary structure, homotetramer. Heme b is required as a cofactor. In terms of processing, formation of the three residue Trp-Tyr-Met cross-link is important for the catalase, but not the peroxidase activity of the enzyme.

The catalysed reaction is H2O2 + AH2 = A + 2 H2O. It carries out the reaction 2 H2O2 = O2 + 2 H2O. In terms of biological role, bifunctional enzyme with both catalase and broad-spectrum peroxidase activity. Also displays NADH oxidase, INH lyase and isonicotinoyl-NAD synthase activities. Important for stationary phase survival. The sequence is that of Catalase-peroxidase (katG) from Rhodobacter capsulatus (Rhodopseudomonas capsulata).